Reading from the N-terminus, the 347-residue chain is Endophilin-A3 (347 aa).

The interval 1–21 (MSVAGLKKQFHKASQLFSEKI) is membrane-binding amphipathic helix. A BAR domain is found at 18–249 (SEKISGAEGT…LELRIALASQ (232 aa)). The segment at 60-87 (PNPAYRAKLGMLNTMSKLRGQVKATGYP) is required for dimerization upon membrane association. Residues 180 to 201 (EEEIRQAVEKFEESKELAERSM) are a coiled coil. The segment at 218–254 (FVEAALDYHRQSTEILQELQNKLELRIALASQVPRRD) is interaction with ARC. Positions 255-284 (YMPKPVNTSSTNANGVEPSSSSKLTGTDIP) are disordered. The segment covering 260–284 (VNTSSTNANGVEPSSSSKLTGTDIP) has biased composition (polar residues). Residues 285 to 344 (SDQPCCRGLYDFEPENEGELGFKEGDIITLTNQIDENWYEGMLRGESGFFPINYVEVIVP) enclose the SH3 domain.

This sequence belongs to the endophilin family. Interacts with SGIP1 and DYDC1. Interacts with FASLG. Interacts with ATXN2. Interacts with BIN2. Interacts with ARC, DNM1 and SYNJ1. As to expression, expressed at high level in testis and at lower level in brain and liver.

Its subcellular location is the cytoplasm. It localises to the early endosome membrane. In terms of biological role, implicated in endocytosis. May recruit other proteins to membranes with high curvature. This is Endophilin-A3 (Sh3gl3) from Rattus norvegicus (Rat).